The sequence spans 153 residues: D-amino acid oxidase regulator (153 aa).

Residues 1–25 are involved in targeting to the mitochondrion; it reads MLEKLMGADSLQLFRSRYTLGKIYF. Residues 138–153 are interaction with DAO; sequence KDQSCNHKEITSTKAE.

In terms of assembly, interacts with DAO (D-amino acid oxidase); the interaction is direct, can occur in the presence or absence of FAD or substrate bound to DAO, and results in a complex containing two DAO homodimers and two DAOA monomers. Interacts with DDO (D-aspartate oxidase); the interaction is direct. Interacts wih SOD1; the interaction is direct. Interacts with MSRB2; the interaction is direct. As to expression, expressed in the amygdala and in astrocytes of the cortex (at protein level). Expressed in the caudate nucleus, spinal cord and testis.

It localises to the cytoplasm. The protein localises to the cytosol. It is found in the golgi apparatus. The protein resides in the mitochondrion. May suppress DAO (D-amino acid oxidase) and SOD1 activity and promote their degradation. Has conversely also been suggested to function as a DAO activator. May stimulate the degradation of DDO (D-aspartate oxidase). May play a role in mitochondrial fission. This Homo sapiens (Human) protein is D-amino acid oxidase regulator (DAOA).